Consider the following 125-residue polypeptide: Holo-[acyl-carrier-protein] synthase (125 aa).

2 residues coordinate Mg(2+): aspartate 8 and glutamate 57.

It belongs to the P-Pant transferase superfamily. AcpS family. Mg(2+) serves as cofactor.

Its subcellular location is the cytoplasm. The enzyme catalyses apo-[ACP] + CoA = holo-[ACP] + adenosine 3',5'-bisphosphate + H(+). Functionally, transfers the 4'-phosphopantetheine moiety from coenzyme A to a Ser of acyl-carrier-protein. This is Holo-[acyl-carrier-protein] synthase from Blochmanniella floridana.